Here is an 857-residue protein sequence, read N- to C-terminus: DNA mismatch repair protein MutS (857 aa).

603–610 (GPNMAGKS) contributes to the ATP binding site.

Belongs to the DNA mismatch repair MutS family.

Functionally, this protein is involved in the repair of mismatches in DNA. It is possible that it carries out the mismatch recognition step. This protein has a weak ATPase activity. The sequence is that of DNA mismatch repair protein MutS from Methanothrix thermoacetophila (strain DSM 6194 / JCM 14653 / NBRC 101360 / PT) (Methanosaeta thermophila).